Reading from the N-terminus, the 95-residue chain is uncharacterized protein (95 aa).

The segment at 1 to 73 is disordered; it reads MAHFKDDLQT…AQQPSMRTEL (73 aa). Polar residues-rich tracts occupy residues 42–52 and 62–73; these read SNHSPSVQESP and GSAQQPSMRTEL.

This is an uncharacterized protein from Homo sapiens (Human).